Consider the following 138-residue polypeptide: Superoxide dismutase [Mn] (138 aa).

Mn(2+) is bound by residues His-2, His-49, Asp-133, and His-137.

Belongs to the iron/manganese superoxide dismutase family. Requires Mn(2+) as cofactor.

It carries out the reaction 2 superoxide + 2 H(+) = H2O2 + O2. Its function is as follows. Destroys superoxide anion radicals which are normally produced within the cells and which are toxic to biological systems. In Mycolicibacterium phlei (Mycobacterium phlei), this protein is Superoxide dismutase [Mn] (sodA).